Consider the following 47-residue polypeptide: uncharacterized protein (47 aa).

A disordered region spans residues 22–47; sequence VGPRTKRANQASPPVGRHSSRLMCPG.

This is an uncharacterized protein from Saccharomyces cerevisiae (strain ATCC 204508 / S288c) (Baker's yeast).